The sequence spans 335 residues: Holliday junction branch migration complex subunit RuvB (335 aa).

The large ATPase domain (RuvB-L) stretch occupies residues 1–181 (MERIIEIEKM…FGMNFWMQFY (181 aa)). ATP-binding positions include Leu-20, Arg-21, Gly-62, Lys-65, Thr-66, Thr-67, 128-130 (EDF), Arg-171, Tyr-181, and Arg-218. Thr-66 serves as a coordination point for Mg(2+). Residues 182–252 (NIEELSQIIT…QARYALHELG (71 aa)) form a small ATPAse domain (RuvB-S) region. Residues 255–335 (DHGFDDLDLR…LPFEPNATLF (81 aa)) are head domain (RuvB-H). DNA-binding residues include Arg-309 and Arg-314.

Belongs to the RuvB family. As to quaternary structure, homohexamer. Forms an RuvA(8)-RuvB(12)-Holliday junction (HJ) complex. HJ DNA is sandwiched between 2 RuvA tetramers; dsDNA enters through RuvA and exits via RuvB. An RuvB hexamer assembles on each DNA strand where it exits the tetramer. Each RuvB hexamer is contacted by two RuvA subunits (via domain III) on 2 adjacent RuvB subunits; this complex drives branch migration. In the full resolvosome a probable DNA-RuvA(4)-RuvB(12)-RuvC(2) complex forms which resolves the HJ.

The protein localises to the cytoplasm. It catalyses the reaction ATP + H2O = ADP + phosphate + H(+). The RuvA-RuvB-RuvC complex processes Holliday junction (HJ) DNA during genetic recombination and DNA repair, while the RuvA-RuvB complex plays an important role in the rescue of blocked DNA replication forks via replication fork reversal (RFR). RuvA specifically binds to HJ cruciform DNA, conferring on it an open structure. The RuvB hexamer acts as an ATP-dependent pump, pulling dsDNA into and through the RuvAB complex. RuvB forms 2 homohexamers on either side of HJ DNA bound by 1 or 2 RuvA tetramers; 4 subunits per hexamer contact DNA at a time. Coordinated motions by a converter formed by DNA-disengaged RuvB subunits stimulates ATP hydrolysis and nucleotide exchange. Immobilization of the converter enables RuvB to convert the ATP-contained energy into a lever motion, pulling 2 nucleotides of DNA out of the RuvA tetramer per ATP hydrolyzed, thus driving DNA branch migration. The RuvB motors rotate together with the DNA substrate, which together with the progressing nucleotide cycle form the mechanistic basis for DNA recombination by continuous HJ branch migration. Branch migration allows RuvC to scan DNA until it finds its consensus sequence, where it cleaves and resolves cruciform DNA. The chain is Holliday junction branch migration complex subunit RuvB from Wolinella succinogenes (strain ATCC 29543 / DSM 1740 / CCUG 13145 / JCM 31913 / LMG 7466 / NCTC 11488 / FDC 602W) (Vibrio succinogenes).